The sequence spans 463 residues: Asparagine--tRNA ligase (463 aa).

Belongs to the class-II aminoacyl-tRNA synthetase family. Homodimer.

The protein localises to the cytoplasm. The catalysed reaction is tRNA(Asn) + L-asparagine + ATP = L-asparaginyl-tRNA(Asn) + AMP + diphosphate + H(+). This Clostridium tetani (strain Massachusetts / E88) protein is Asparagine--tRNA ligase.